The chain runs to 121 residues: Phosphoribosyl-AMP cyclohydrolase (121 aa).

Mg(2+) is bound at residue aspartate 76. Residue cysteine 77 coordinates Zn(2+). Positions 78 and 80 each coordinate Mg(2+). Cysteine 93 and cysteine 100 together coordinate Zn(2+).

Belongs to the PRA-CH family. In terms of assembly, homodimer. Mg(2+) serves as cofactor. The cofactor is Zn(2+).

It is found in the cytoplasm. The enzyme catalyses 1-(5-phospho-beta-D-ribosyl)-5'-AMP + H2O = 1-(5-phospho-beta-D-ribosyl)-5-[(5-phospho-beta-D-ribosylamino)methylideneamino]imidazole-4-carboxamide. It functions in the pathway amino-acid biosynthesis; L-histidine biosynthesis; L-histidine from 5-phospho-alpha-D-ribose 1-diphosphate: step 3/9. Catalyzes the hydrolysis of the adenine ring of phosphoribosyl-AMP. This is Phosphoribosyl-AMP cyclohydrolase from Paracoccus denitrificans (strain Pd 1222).